The sequence spans 159 residues: 17 kDa surface antigen (159 aa).

Residues Met1 to Ala19 form the signal peptide. The N-palmitoyl cysteine moiety is linked to residue Cys20. The S-diacylglycerol cysteine moiety is linked to residue Cys20.

It belongs to the rickettsiale 17 kDa surface antigen family.

Its subcellular location is the cell outer membrane. This chain is 17 kDa surface antigen (omp), found in Rickettsia prowazekii (strain Madrid E).